The primary structure comprises 614 residues: Probable Xaa-Pro aminopeptidase P (614 aa).

The Mn(2+) site is built by D411, D422, E520, and E534.

It belongs to the peptidase M24B family. Requires Mn(2+) as cofactor.

It catalyses the reaction Release of any N-terminal amino acid, including proline, that is linked to proline, even from a dipeptide or tripeptide.. Catalyzes the removal of a penultimate prolyl residue from the N-termini of peptides. The protein is Probable Xaa-Pro aminopeptidase P (AMPP) of Sordaria macrospora (strain ATCC MYA-333 / DSM 997 / K(L3346) / K-hell).